The chain runs to 537 residues: 2-succinyl-5-enolpyruvyl-6-hydroxy-3-cyclohexene-1-carboxylate synthase (537 aa).

This sequence belongs to the TPP enzyme family. MenD subfamily. In terms of assembly, homodimer. Mg(2+) is required as a cofactor. The cofactor is Mn(2+). It depends on thiamine diphosphate as a cofactor.

The catalysed reaction is isochorismate + 2-oxoglutarate + H(+) = 5-enolpyruvoyl-6-hydroxy-2-succinyl-cyclohex-3-ene-1-carboxylate + CO2. It functions in the pathway quinol/quinone metabolism; 1,4-dihydroxy-2-naphthoate biosynthesis; 1,4-dihydroxy-2-naphthoate from chorismate: step 2/7. It participates in quinol/quinone metabolism; menaquinone biosynthesis. In terms of biological role, catalyzes the thiamine diphosphate-dependent decarboxylation of 2-oxoglutarate and the subsequent addition of the resulting succinic semialdehyde-thiamine pyrophosphate anion to isochorismate to yield 2-succinyl-5-enolpyruvyl-6-hydroxy-3-cyclohexene-1-carboxylate (SEPHCHC). The chain is 2-succinyl-5-enolpyruvyl-6-hydroxy-3-cyclohexene-1-carboxylate synthase from Rhodococcus erythropolis (strain PR4 / NBRC 100887).